We begin with the raw amino-acid sequence, 302 residues long: Probable 2-(5''-triphosphoribosyl)-3'-dephosphocoenzyme-A synthase 1 (302 aa).

This sequence belongs to the CitG/MdcB family.

The enzyme catalyses 3'-dephospho-CoA + ATP = 2'-(5''-triphospho-alpha-D-ribosyl)-3'-dephospho-CoA + adenine. This Salmonella typhi protein is Probable 2-(5''-triphosphoribosyl)-3'-dephosphocoenzyme-A synthase 1.